A 748-amino-acid polypeptide reads, in one-letter code: Rho GTPase-activating protein 24 (748 aa).

Residues asparagine 18 to tryptophan 124 enclose the PH domain. The Rho-GAP domain maps to glutamine 134–phenylalanine 328. The disordered stretch occupies residues phenylalanine 328–serine 476. Polar residues-rich tracts occupy residues glutamine 335–asparagine 347 and glycine 356–glutamate 368. A phosphoserine mark is found at serine 369, serine 391, serine 396, serine 398, serine 402, serine 413, serine 415, and serine 437. The segment covering serine 369–serine 381 has biased composition (basic and acidic residues). Positions proline 382–asparagine 405 are enriched in polar residues. Polar residues predominate over residues isoleucine 432 to serine 476. The residue at position 452 (threonine 452) is a Phosphothreonine. At serine 495 the chain carries Phosphoserine. The interval aspartate 582–asparagine 640 is disordered. Residues aspartate 600–serine 615 are compositionally biased toward basic and acidic residues. Over residues glycine 617–serine 630 the composition is skewed to low complexity. Positions glutamate 631 to asparagine 640 are enriched in polar residues. Positions serine 649–phenylalanine 729 form a coiled coil.

In terms of assembly, interacts with FLNA. Phosphorylated by ROCK, leading to activate the RacGAP activity.

Its subcellular location is the cytoplasm. It is found in the cytoskeleton. The protein resides in the cell junction. It localises to the adherens junction. The protein localises to the focal adhesion. Its subcellular location is the cell projection. Functionally, rho GTPase-activating protein involved in cell polarity, cell morphology and cytoskeletal organization. Acts as a GTPase activator for the Rac-type GTPase by converting it to an inactive GDP-bound state. Controls actin remodeling by inactivating Rac downstream of Rho leading to suppress leading edge protrusion and promotes cell retraction to achieve cellular polarity. Able to suppress RAC1 and CDC42 activity in vitro. Overexpression induces cell rounding with partial or complete disruption of actin stress fibers and formation of membrane ruffles, lamellipodia, and filopodia. Isoform 2 is a vascular cell-specific GAP involved in modulation of angiogenesis. The protein is Rho GTPase-activating protein 24 (Arhgap24) of Rattus norvegicus (Rat).